A 241-amino-acid chain; its full sequence is 1-(5-phosphoribosyl)-5-[(5-phosphoribosylamino)methylideneamino] imidazole-4-carboxamide isomerase (241 aa).

Asp8 functions as the Proton acceptor in the catalytic mechanism. Residue Asp130 is the Proton donor of the active site.

This sequence belongs to the HisA/HisF family.

The protein resides in the cytoplasm. It catalyses the reaction 1-(5-phospho-beta-D-ribosyl)-5-[(5-phospho-beta-D-ribosylamino)methylideneamino]imidazole-4-carboxamide = 5-[(5-phospho-1-deoxy-D-ribulos-1-ylimino)methylamino]-1-(5-phospho-beta-D-ribosyl)imidazole-4-carboxamide. The protein operates within amino-acid biosynthesis; L-histidine biosynthesis; L-histidine from 5-phospho-alpha-D-ribose 1-diphosphate: step 4/9. The chain is 1-(5-phosphoribosyl)-5-[(5-phosphoribosylamino)methylideneamino] imidazole-4-carboxamide isomerase from Leptospira borgpetersenii serovar Hardjo-bovis (strain L550).